Reading from the N-terminus, the 273-residue chain is Undecaprenyl-diphosphatase (273 aa).

The next 8 membrane-spanning stretches (helical) occupy residues 3-23, 48-68, 89-109, 116-136, 151-171, 192-212, 225-245, and 253-273; these read IIEL…EFAP, GANT…VVVF, LTLM…VLFE, LFST…MIAA, ITYK…WPGF, ADFT…ISLL, FFVV…RFFL, and LVPF…VYFA.

It belongs to the UppP family.

The protein resides in the cell membrane. It catalyses the reaction di-trans,octa-cis-undecaprenyl diphosphate + H2O = di-trans,octa-cis-undecaprenyl phosphate + phosphate + H(+). Functionally, catalyzes the dephosphorylation of undecaprenyl diphosphate (UPP). Confers resistance to bacitracin. In Anoxybacillus flavithermus (strain DSM 21510 / WK1), this protein is Undecaprenyl-diphosphatase.